The following is a 321-amino-acid chain: Cytochrome f (321 aa).

The first 38 residues, 1-38, serve as a signal peptide directing secretion; sequence MKKNFYTISKTMSRSLKLILFSVFIGFSIFLIPQPTWA. Positions 39, 59, 62, and 63 each coordinate heme. Residues 288-308 form a helical membrane-spanning segment; that stretch reads VIGMIIFFIGVGLSQIMLVLK.

This sequence belongs to the cytochrome f family. The 4 large subunits of the cytochrome b6-f complex are cytochrome b6, subunit IV (17 kDa polypeptide, PetD), cytochrome f and the Rieske protein, while the 4 small subunits are PetG, PetL, PetM and PetN. The complex functions as a dimer. Heme is required as a cofactor.

The protein resides in the cellular thylakoid membrane. Component of the cytochrome b6-f complex, which mediates electron transfer between photosystem II (PSII) and photosystem I (PSI), cyclic electron flow around PSI, and state transitions. In Prochlorococcus marinus (strain NATL2A), this protein is Cytochrome f.